We begin with the raw amino-acid sequence, 364 residues long: Cobalt-precorrin-5B C(1)-methyltransferase (364 aa).

Belongs to the CbiD family.

It catalyses the reaction Co-precorrin-5B + S-adenosyl-L-methionine = Co-precorrin-6A + S-adenosyl-L-homocysteine. It participates in cofactor biosynthesis; adenosylcobalamin biosynthesis; cob(II)yrinate a,c-diamide from sirohydrochlorin (anaerobic route): step 6/10. Catalyzes the methylation of C-1 in cobalt-precorrin-5B to form cobalt-precorrin-6A. This is Cobalt-precorrin-5B C(1)-methyltransferase from Pseudomonas entomophila (strain L48).